Here is an 807-residue protein sequence, read N- to C-terminus: Probable phosphoketolase (807 aa).

The protein belongs to the XFP family. Requires thiamine diphosphate as cofactor.

The protein is Probable phosphoketolase of Mesorhizobium japonicum (strain LMG 29417 / CECT 9101 / MAFF 303099) (Mesorhizobium loti (strain MAFF 303099)).